The sequence spans 92 residues: Small ribosomal subunit protein uS19c (92 aa).

This sequence belongs to the universal ribosomal protein uS19 family.

It localises to the plastid. It is found in the chloroplast. In terms of biological role, protein S19 forms a complex with S13 that binds strongly to the 16S ribosomal RNA. The protein is Small ribosomal subunit protein uS19c (rps19) of Trieres chinensis (Marine centric diatom).